We begin with the raw amino-acid sequence, 287 residues long: Bifunctional protein FolD 1 (287 aa).

NADP(+) contacts are provided by residues 170 to 172 (GRS) and S195.

Belongs to the tetrahydrofolate dehydrogenase/cyclohydrolase family. In terms of assembly, homodimer.

The catalysed reaction is (6R)-5,10-methylene-5,6,7,8-tetrahydrofolate + NADP(+) = (6R)-5,10-methenyltetrahydrofolate + NADPH. It catalyses the reaction (6R)-5,10-methenyltetrahydrofolate + H2O = (6R)-10-formyltetrahydrofolate + H(+). The protein operates within one-carbon metabolism; tetrahydrofolate interconversion. Functionally, catalyzes the oxidation of 5,10-methylenetetrahydrofolate to 5,10-methenyltetrahydrofolate and then the hydrolysis of 5,10-methenyltetrahydrofolate to 10-formyltetrahydrofolate. This is Bifunctional protein FolD 1 from Streptomyces avermitilis (strain ATCC 31267 / DSM 46492 / JCM 5070 / NBRC 14893 / NCIMB 12804 / NRRL 8165 / MA-4680).